The chain runs to 118 residues: Myotrophin (118 aa).

ANK repeat units follow at residues Met1–Arg30, Gly34–Asp65, and His67–Gly98.

It belongs to the myotrophin family.

It localises to the cytoplasm. It is found in the nucleus. Its subcellular location is the perinuclear region. Regulates NF-kappa-B transcription factor activity. Promotes growth of cardiomyocytes, but not cardiomyocyte proliferation. Promotes cardiac muscle hypertrophy. Plays a role in the regulation of the growth of actin filaments. Inhibits the activity of the F-actin-capping protein complex. This is Myotrophin (mtpn) from Danio rerio (Zebrafish).